The following is a 548-amino-acid chain: Alpha-1,3-mannosyl-glycoprotein 4-beta-N-acetylglucosaminyltransferase B (548 aa).

The Cytoplasmic segment spans residues 1–7 (MRLRNGT). Residues 8–28 (FLTLLLFCLCAFLSLSWYAAL) form a helical; Signal-anchor for type II membrane protein membrane-spanning segment. At 29–548 (SGQKGDVVDI…LSEIFLKKAD (520 aa)) the chain is on the lumenal side. Residues 36 to 83 (VDIYQREFLALRDRLHAAEQESLKRSKELNLVLEEIKRAVSERQALRD) are a coiled coil. N-linked (GlcNAc...) asparagine glycosylation is found at asparagine 87 and asparagine 103.

This sequence belongs to the glycosyltransferase 54 family. Interacts with SLC35A3. The cofactor is a divalent metal cation. Post-translationally, N-glycosylated.

Its subcellular location is the golgi apparatus membrane. The catalysed reaction is N(4)-{beta-D-GlcNAc-(1-&gt;2)-alpha-D-Man-(1-&gt;3)-[beta-D-GlcNAc-(1-&gt;2)-alpha-D-Man-(1-&gt;6)]-beta-D-Man-(1-&gt;4)-beta-D-GlcNAc-(1-&gt;4)-beta-D-GlcNAc}-L-asparaginyl-[protein] + UDP-N-acetyl-alpha-D-glucosamine = N(4)-{beta-D-GlcNAc-(1-&gt;2)-[beta-D-GlcNAc-(1-&gt;4)]-alpha-D-Man-(1-&gt;3)-[beta-D-GlcNAc-(1-&gt;2)-alpha-D-Man-(1-&gt;6)]-beta-D-Man-(1-&gt;4)-beta-D-GlcNAc-(1-&gt;4)-beta-D-GlcNAc}-L-asparaginyl-[protein] + UDP + H(+). The enzyme catalyses an N(4)-{beta-D-GlcNAc-(1-&gt;2)-alpha-D-Man-(1-&gt;3)-[alpha-D-Man-(1-&gt;6)]-beta-D-Man-(1-&gt;4)-beta-D-GlcNAc-(1-&gt;4)-beta-D-GlcNAc}-L-asparaginyl-[protein] + UDP-N-acetyl-alpha-D-glucosamine = an N(4)-{beta-D-GlcNAc-(1-&gt;2)-[beta-D-GlcNAc-(1-&gt;4)]-alpha-D-Man-(1-&gt;3)-[alpha-D-Man-(1-&gt;6)]-beta-D-Man-(1-&gt;4)-beta-D-GlcNAc-(1-&gt;4)-beta-D-GlcNAc}-L-asparaginyl-[protein] + UDP + H(+). It carries out the reaction an N(4)-{beta-D-GlcNAc-(1-&gt;2)-alpha-D-Man-(1-&gt;3)-[beta-D-GlcNAc-(1-&gt;2)-[beta-D-GlcNAc-(1-&gt;6)]-alpha-D-Man-(1-&gt;6)]-beta-D-Man-(1-&gt;4)-beta-D-GlcNAc-(1-&gt;4)-beta-D-GlcNAc}-L-asparaginyl-[protein] + UDP-N-acetyl-alpha-D-glucosamine = an N(4)-{beta-D-GlcNAc-(1-&gt;2)-[beta-D-GlcNAc-(1-&gt;4)]-alpha-D-Man-(1-&gt;3)-[beta-D-GlcNAc-(1-&gt;2)-[beta-D-GlcNAc-(1-&gt;6)]-alpha-D-Man-(1-&gt;6)]-beta-D-Man-(1-&gt;4)-beta-D-GlcNAc-(1-&gt;4)-beta-D-GlcNAc}-L-asparaginyl-[protein] + UDP + H(+). It catalyses the reaction an N(4)-{beta-D-GlcNAc-(1-&gt;2)-alpha-D-Man-(1-&gt;3)-[beta-D-GlcNAc-(1-&gt;2)-alpha-D-Man-(1-&gt;6)]-beta-D-Man-(1-&gt;4)-beta-D-GlcNAc-(1-&gt;4)-[alpha-L-Fuc-(1-&gt;6)]-beta-D-GlcNAc}-L-asparaginyl-[protein] + UDP-N-acetyl-alpha-D-glucosamine = N(4)-{beta-D-GlcNAc-(1-&gt;2)-[beta-D-GlcNAc-(1-&gt;4)]-alpha-D-Man-(1-&gt;3)-[beta-D-GlcNAc-(1-&gt;2)-alpha-D-Man-(1-&gt;6)]-beta-D-Man-(1-&gt;4)-beta-D-GlcNAc-(1-&gt;4)-[alpha-L-Fuc-(1-&gt;6)]-beta-D-GlcNAc}-asparaginyl-[protein] + UDP + H(+). The catalysed reaction is an N(4)-{beta-D-GlcNAc-(1-&gt;2)-alpha-D-Man-(1-&gt;3)-[beta-D-Gal-(1-&gt;4)-beta-D-GlcNAc-(1-&gt;2)-alpha-D-Man-(1-&gt;6)]-beta-D-Man-(1-&gt;4)-beta-D-GlcNAc-(1-&gt;4)-beta-D-GlcNAc}-L-asparaginyl-[protein] + UDP-N-acetyl-alpha-D-glucosamine = an N(4)-{beta-D-GlcNAc-(1-&gt;2)-[beta-D-GlcNAc-(1-&gt;4)]-alpha-D-Man-(1-&gt;3)-[beta-D-Gal-(1-&gt;4)-beta-D-GlcNAc-(1-&gt;2)-alpha-D-Man-(1-&gt;6)]-beta-D-Man-(1-&gt;4)-beta-D-GlcNAc-(1-&gt;4)-beta-D-GlcNAc}-L-asparaginyl-[protein] + UDP + H(+). The enzyme catalyses N(4)-{beta-D-GlcNAc-(1-&gt;2)-alpha-D-Man-(1-&gt;3)-[alpha-D-Man-(1-&gt;3)-{alpha-D-Man-(1-&gt;6)}-alpha-D-Man-(1-&gt;6)]-beta-D-Man-(1-&gt;4)-beta-D-GlcNAc-(1-&gt;4)-beta-D-GlcNAc}-asparaginyl-[protein] + UDP-N-acetyl-alpha-D-glucosamine = N(4)-{beta-D-GlcNAc-(1-&gt;2)-[beta-D-GlcNAc-(1-&gt;4)]-alpha-D-Man-(1-&gt;3)-[alpha-D-Man-(1-&gt;3)-{alpha-D-Man-(1-&gt;6)}-alpha-D-Man-(1-&gt;6)]-beta-D-Man-(1-&gt;4)-beta-D-GlcNAc-(1-&gt;4)-beta-D-GlcNAc}-asparaginyl-[protein] + UDP + H(+). It carries out the reaction N(4)-{beta-D-GlcNAc-(1-&gt;2)-alpha-D-Man-(1-&gt;3)-beta-D-Man-(1-&gt;4)-beta-D-GlcNAc-(1-&gt;4)-beta-D-GlcNAc}-asparaginyl-[protein] + UDP-N-acetyl-alpha-D-glucosamine = N(4)-{beta-D-GlcNAc-(1-&gt;2)-[beta-D-GlcNAc-(1-&gt;4)]-alpha-D-Man-(1-&gt;3)-beta-D-Man-(1-&gt;4)-beta-D-GlcNAc-(1-&gt;4)-beta-D-GlcNAc}-asparaginyl-[protein] + UDP + H(+). It functions in the pathway protein modification; protein glycosylation. Glycosyltransferase that catalyzes the transfer of GlcNAc from UDP-GlcNAc to the GlcNAcbeta1-2Manalpha1-3 arm of the core structure of N-linked glycans through a beta1-4 linkage and participates in the production of tri- and tetra-antennary N-linked sugar chains. Prefers complex-type N-glycans over hybrid-types. Has lower affinities for donors or acceptors than MGAT4A, suggesting that, under physiological conditions, it is not the main contributor in N-glycan biosynthesis. This is Alpha-1,3-mannosyl-glycoprotein 4-beta-N-acetylglucosaminyltransferase B from Mus musculus (Mouse).